The following is a 399-amino-acid chain: Succinate--CoA ligase [ADP-forming] subunit beta (399 aa).

The 246-residue stretch at 9-254 (KELLAKFGVA…ETEEDPAEIE (246 aa)) folds into the ATP-grasp domain. ATP contacts are provided by residues Lys46, 53 to 55 (GRG), Ala112, and Glu117. Residues Asn209 and Asp223 each contribute to the Mg(2+) site. Residues Asn274 and 331-333 (GIM) contribute to the substrate site.

Belongs to the succinate/malate CoA ligase beta subunit family. In terms of assembly, heterotetramer of two alpha and two beta subunits. It depends on Mg(2+) as a cofactor.

It carries out the reaction succinate + ATP + CoA = succinyl-CoA + ADP + phosphate. It catalyses the reaction GTP + succinate + CoA = succinyl-CoA + GDP + phosphate. It functions in the pathway carbohydrate metabolism; tricarboxylic acid cycle; succinate from succinyl-CoA (ligase route): step 1/1. In terms of biological role, succinyl-CoA synthetase functions in the citric acid cycle (TCA), coupling the hydrolysis of succinyl-CoA to the synthesis of either ATP or GTP and thus represents the only step of substrate-level phosphorylation in the TCA. The beta subunit provides nucleotide specificity of the enzyme and binds the substrate succinate, while the binding sites for coenzyme A and phosphate are found in the alpha subunit. The protein is Succinate--CoA ligase [ADP-forming] subunit beta of Rhizorhabdus wittichii (strain DSM 6014 / CCUG 31198 / JCM 15750 / NBRC 105917 / EY 4224 / RW1) (Sphingomonas wittichii).